A 435-amino-acid chain; its full sequence is GTPase Der (435 aa).

EngA-type G domains follow at residues 3-168 (PLVA…PDET) and 176-351 (IKLA…QNRQ). Residues 9 to 16 (GRPNVGKS), 56 to 60 (DTGGY), 120 to 123 (NKVE), 182 to 189 (GRPNVGKS), 229 to 233 (DTAGL), and 294 to 297 (NKWD) contribute to the GTP site. One can recognise a KH-like domain in the interval 352–435 (KKISTSELNR…VPVSFRYRKK (84 aa)).

This sequence belongs to the TRAFAC class TrmE-Era-EngA-EngB-Septin-like GTPase superfamily. EngA (Der) GTPase family. As to quaternary structure, associates with the 50S ribosomal subunit.

GTPase that plays an essential role in the late steps of ribosome biogenesis. This Chlorobium phaeobacteroides (strain BS1) protein is GTPase Der.